We begin with the raw amino-acid sequence, 358 residues long: Protein RecA (358 aa).

Residue G76–T83 participates in ATP binding.

This sequence belongs to the RecA family.

It is found in the cytoplasm. Functionally, can catalyze the hydrolysis of ATP in the presence of single-stranded DNA, the ATP-dependent uptake of single-stranded DNA by duplex DNA, and the ATP-dependent hybridization of homologous single-stranded DNAs. It interacts with LexA causing its activation and leading to its autocatalytic cleavage. In Rhodospirillum centenum (strain ATCC 51521 / SW), this protein is Protein RecA.